A 321-amino-acid chain; its full sequence is Olfactory receptor 52N2 (321 aa).

At methionine 1–isoleucine 27 the chain is on the extracellular side. An N-linked (GlcNAc...) asparagine glycan is attached at asparagine 5. A helical transmembrane segment spans residues tryptophan 28 to isoleucine 48. Topologically, residues cysteine 49–alanine 56 are cytoplasmic. Residues leucine 57–threonine 77 traverse the membrane as a helical segment. The Extracellular portion of the chain corresponds to threonine 78 to alanine 101. A disulfide bond links cysteine 99 and cysteine 191. The chain crosses the membrane as a helical span at residues glutamine 102 to leucine 122. The Cytoplasmic portion of the chain corresponds to aspartate 123–proline 141. The chain crosses the membrane as a helical span at residues valine 142–threonine 162. Topologically, residues leucine 163–alanine 198 are extracellular. The helical transmembrane segment at isoleucine 199–serine 219 threads the bilayer. Over tyrosine 220–alanine 239 the chain is Cytoplasmic. The chain crosses the membrane as a helical span at residues phenylalanine 240–threonine 260. Residues phenylalanine 261 to histidine 276 are Extracellular-facing. A helical transmembrane segment spans residues isoleucine 277–valine 297. Over lysine 298 to lysine 321 the chain is Cytoplasmic.

It belongs to the G-protein coupled receptor 1 family.

The protein localises to the cell membrane. Odorant receptor. The sequence is that of Olfactory receptor 52N2 (OR52N2) from Homo sapiens (Human).